The primary structure comprises 241 residues: Fas-associated death domain protein (241 aa).

Residues 1 to 101 (MPGNHWYDIL…VNIYQEERLA (101 aa)) form a death-inducing region. Residues 151 to 237 (RKRTAVFNKI…RNDIKRKVEQ (87 aa)) form the Death domain.

N-terminus interacts with Dredd. Interacts with imd.

It localises to the cytoplasm. Functionally, component of the IMD signaling pathway and is required for the host defense against Gram-negative bacteria. Interacts with Dredd, promotes cleavage of Dredd and is necessary and sufficient for enhancing Dredd-induced apoptosis. The polypeptide is Fas-associated death domain protein (Fadd) (Drosophila pseudoobscura pseudoobscura (Fruit fly)).